We begin with the raw amino-acid sequence, 192 residues long: Large ribosomal subunit protein uL5 (192 aa).

This sequence belongs to the universal ribosomal protein uL5 family. Part of the 50S ribosomal subunit; part of the 5S rRNA/L5/L18/L25 subcomplex. Contacts the 5S rRNA and the P site tRNA. Forms a bridge to the 30S subunit in the 70S ribosome.

Its function is as follows. This is one of the proteins that bind and probably mediate the attachment of the 5S RNA into the large ribosomal subunit, where it forms part of the central protuberance. In the 70S ribosome it contacts protein S13 of the 30S subunit (bridge B1b), connecting the 2 subunits; this bridge is implicated in subunit movement. Contacts the P site tRNA; the 5S rRNA and some of its associated proteins might help stabilize positioning of ribosome-bound tRNAs. The protein is Large ribosomal subunit protein uL5 of Sphingopyxis alaskensis (strain DSM 13593 / LMG 18877 / RB2256) (Sphingomonas alaskensis).